The following is a 141-amino-acid chain: Hemoglobin subunit alpha-A (141 aa).

The Globin domain maps to 1-141 (VLSPADKSNV…VGTVLTAKYR (141 aa)). O2 is bound at residue H58. Heme b is bound at residue H87.

Belongs to the globin family. Heterotetramer of two alpha chains and two beta chains. In terms of tissue distribution, red blood cells.

Functionally, involved in oxygen transport from the lung to the various peripheral tissues. The protein is Hemoglobin subunit alpha-A (HBAA) of Passer montanus (Eurasian tree sparrow).